Consider the following 950-residue polypeptide: Serine/threonine-protein kinase atg1 (950 aa).

The Protein kinase domain occupies 6–311 (YTRLDEIGRG…FPDFFENGVI (306 aa)). ATP contacts are provided by residues 12-20 (IGRGSFATV) and lysine 35. Residue aspartate 149 is the Proton acceptor of the active site. Disordered regions lie at residues 314–425 (PIPG…HATA), 443–467 (RQRG…LREE), 505–570 (QGGI…QSPT), 671–690 (VQTD…NPDS), and 926–950 (PTPS…TPPK). Composition is skewed to polar residues over residues 370–389 (GLTQ…PTTT), 447–458 (RNTFSEGSPQTD), and 511–520 (GAQTGALSRR). Positions 549–565 (SRADSMHNRQSSYERRY) are enriched in basic and acidic residues.

It belongs to the protein kinase superfamily. Ser/Thr protein kinase family. APG1/unc-51/ULK1 subfamily. Homodimer. Forms a ternary complex with ATG13 and ATG17.

The protein resides in the cytoplasm. It localises to the preautophagosomal structure membrane. The catalysed reaction is L-seryl-[protein] + ATP = O-phospho-L-seryl-[protein] + ADP + H(+). The enzyme catalyses L-threonyl-[protein] + ATP = O-phospho-L-threonyl-[protein] + ADP + H(+). Serine/threonine protein kinase involved in the cytoplasm to vacuole transport (Cvt) and found to be essential in autophagy, where it is required for the formation of autophagosomes. Involved in the clearance of protein aggregates which cannot be efficiently cleared by the proteasome. Required for selective autophagic degradation of the nucleus (nucleophagy) as well as for mitophagy which contributes to regulate mitochondrial quantity and quality by eliminating the mitochondria to a basal level to fulfill cellular energy requirements and preventing excess ROS production. Also involved in endoplasmic reticulum-specific autophagic process, in selective removal of ER-associated degradation (ERAD) substrates. Plays a key role in ATG9 and ATG23 cycling through the pre-autophagosomal structure and is necessary to promote ATG18 binding to ATG9 through phosphorylation of ATG9. Catalyzes phosphorylation of ATG4, decreasing the interaction between ATG4 and ATG8 and impairing deconjugation of PE-conjugated forms of ATG8. The sequence is that of Serine/threonine-protein kinase atg1 from Neosartorya fischeri (strain ATCC 1020 / DSM 3700 / CBS 544.65 / FGSC A1164 / JCM 1740 / NRRL 181 / WB 181) (Aspergillus fischerianus).